Here is a 312-residue protein sequence, read N- to C-terminus: Acetyl-coenzyme A carboxylase carboxyl transferase subunit beta (312 aa).

One can recognise a CoA carboxyltransferase N-terminal domain in the interval 24-293; that stretch reads LWIKCPDSGQ…PHADEVAAPP (270 aa). A disordered region spans residues 286 to 312; that stretch reads ADEVAAPPPPDVEGPPPAAEPVALPPA. The span at 291-312 shows a compositional bias: pro residues; the sequence is APPPPDVEGPPPAAEPVALPPA.

It belongs to the AccD/PCCB family. As to quaternary structure, acetyl-CoA carboxylase is a heterohexamer composed of biotin carboxyl carrier protein (AccB), biotin carboxylase (AccC) and two subunits each of ACCase subunit alpha (AccA) and ACCase subunit beta (AccD).

It is found in the cytoplasm. It carries out the reaction N(6)-carboxybiotinyl-L-lysyl-[protein] + acetyl-CoA = N(6)-biotinyl-L-lysyl-[protein] + malonyl-CoA. It functions in the pathway lipid metabolism; malonyl-CoA biosynthesis; malonyl-CoA from acetyl-CoA: step 1/1. Its function is as follows. Component of the acetyl coenzyme A carboxylase (ACC) complex. Biotin carboxylase (BC) catalyzes the carboxylation of biotin on its carrier protein (BCCP) and then the CO(2) group is transferred by the transcarboxylase to acetyl-CoA to form malonyl-CoA. The chain is Acetyl-coenzyme A carboxylase carboxyl transferase subunit beta from Afipia carboxidovorans (strain ATCC 49405 / DSM 1227 / KCTC 32145 / OM5) (Oligotropha carboxidovorans).